We begin with the raw amino-acid sequence, 370 residues long: Aminomethyltransferase (370 aa).

Belongs to the GcvT family. As to quaternary structure, the glycine cleavage system is composed of four proteins: P, T, L and H.

The catalysed reaction is N(6)-[(R)-S(8)-aminomethyldihydrolipoyl]-L-lysyl-[protein] + (6S)-5,6,7,8-tetrahydrofolate = N(6)-[(R)-dihydrolipoyl]-L-lysyl-[protein] + (6R)-5,10-methylene-5,6,7,8-tetrahydrofolate + NH4(+). In terms of biological role, the glycine cleavage system catalyzes the degradation of glycine. This Prochlorococcus marinus (strain MIT 9515) protein is Aminomethyltransferase.